We begin with the raw amino-acid sequence, 193 residues long: Glycerol-3-phosphate acyltransferase (193 aa).

4 helical membrane passes run 2–22, 76–96, 112–132, and 152–172; these read LIAL…GLIV, VPIH…FPVF, LLFY…VFLF, and CLFV…AFVI.

The protein belongs to the PlsY family. In terms of assembly, probably interacts with PlsX.

It localises to the cell membrane. The catalysed reaction is an acyl phosphate + sn-glycerol 3-phosphate = a 1-acyl-sn-glycero-3-phosphate + phosphate. It functions in the pathway lipid metabolism; phospholipid metabolism. Functionally, catalyzes the transfer of an acyl group from acyl-phosphate (acyl-PO(4)) to glycerol-3-phosphate (G3P) to form lysophosphatidic acid (LPA). This enzyme utilizes acyl-phosphate as fatty acyl donor, but not acyl-CoA or acyl-ACP. This is Glycerol-3-phosphate acyltransferase from Bacillus velezensis (strain DSM 23117 / BGSC 10A6 / LMG 26770 / FZB42) (Bacillus amyloliquefaciens subsp. plantarum).